We begin with the raw amino-acid sequence, 320 residues long: Malate dehydrogenase (320 aa).

NAD(+) is bound by residues 10–15 (GSGMIG) and D34. R83 and R89 together coordinate substrate. NAD(+)-binding positions include N96 and 119–121 (ITN). The substrate site is built by N121 and R152. The active-site Proton acceptor is H176.

Belongs to the LDH/MDH superfamily. MDH type 3 family.

The catalysed reaction is (S)-malate + NAD(+) = oxaloacetate + NADH + H(+). Its function is as follows. Catalyzes the reversible oxidation of malate to oxaloacetate. In Rhizobium meliloti (strain 1021) (Ensifer meliloti), this protein is Malate dehydrogenase.